A 118-amino-acid polypeptide reads, in one-letter code: Ribosome-binding factor A (118 aa).

This sequence belongs to the RbfA family. As to quaternary structure, monomer. Binds 30S ribosomal subunits, but not 50S ribosomal subunits or 70S ribosomes.

It is found in the cytoplasm. In terms of biological role, one of several proteins that assist in the late maturation steps of the functional core of the 30S ribosomal subunit. Associates with free 30S ribosomal subunits (but not with 30S subunits that are part of 70S ribosomes or polysomes). Required for efficient processing of 16S rRNA. May interact with the 5'-terminal helix region of 16S rRNA. In Dehalococcoides mccartyi (strain ATCC BAA-2100 / JCM 16839 / KCTC 5957 / BAV1), this protein is Ribosome-binding factor A.